Reading from the N-terminus, the 373-residue chain is Chaperone protein DnaJ (373 aa).

One can recognise a J domain in the interval 4–69; the sequence is SYYEILEITQ…EKRAIYDRYG (66 aa). Residues 135 to 212 form a CR-type zinc finger; it reads GCKKNIDFTY…CKGLGYNESK (78 aa). Positions 148, 151, 164, 167, 186, 189, 200, and 203 each coordinate Zn(2+). CXXCXGXG motif repeat units follow at residues 148–155, 164–171, 186–193, and 200–207; these read CKTCNGTG, CPKCQGRG, CPDCQGIG, and CSDCKGLG.

It belongs to the DnaJ family. In terms of assembly, homodimer. The cofactor is Zn(2+).

It is found in the cytoplasm. Participates actively in the response to hyperosmotic and heat shock by preventing the aggregation of stress-denatured proteins and by disaggregating proteins, also in an autonomous, DnaK-independent fashion. Unfolded proteins bind initially to DnaJ; upon interaction with the DnaJ-bound protein, DnaK hydrolyzes its bound ATP, resulting in the formation of a stable complex. GrpE releases ADP from DnaK; ATP binding to DnaK triggers the release of the substrate protein, thus completing the reaction cycle. Several rounds of ATP-dependent interactions between DnaJ, DnaK and GrpE are required for fully efficient folding. Also involved, together with DnaK and GrpE, in the DNA replication of plasmids through activation of initiation proteins. The protein is Chaperone protein DnaJ of Campylobacter jejuni subsp. jejuni serotype O:2 (strain ATCC 700819 / NCTC 11168).